Here is a 356-residue protein sequence, read N- to C-terminus: Phosphoribosylformylglycinamidine cyclo-ligase (356 aa).

This sequence belongs to the AIR synthase family.

It localises to the cytoplasm. The catalysed reaction is 2-formamido-N(1)-(5-O-phospho-beta-D-ribosyl)acetamidine + ATP = 5-amino-1-(5-phospho-beta-D-ribosyl)imidazole + ADP + phosphate + H(+). It functions in the pathway purine metabolism; IMP biosynthesis via de novo pathway; 5-amino-1-(5-phospho-D-ribosyl)imidazole from N(2)-formyl-N(1)-(5-phospho-D-ribosyl)glycinamide: step 2/2. This Desulfotalea psychrophila (strain LSv54 / DSM 12343) protein is Phosphoribosylformylglycinamidine cyclo-ligase.